A 388-amino-acid chain; its full sequence is Putative N(4)-(beta-N-acetylglucosaminyl)-L-asparaginase GL17147 (388 aa).

An N-terminal signal peptide occupies residues 1 to 20; it reads MYKAQYLWLFGLVLISRSAT. 2 disulfide bridges follow: Cys-94–Cys-99 and Cys-193–Cys-209. Thr-240 acts as the Nucleophile in catalysis. Substrate is bound by residues 268 to 271 and 291 to 294; these read RVGD and TGDG. A disulfide bond links Cys-351 and Cys-378.

The protein belongs to the Ntn-hydrolase family. As to quaternary structure, heterotetramer of two alpha and two beta chains arranged as a dimer of alpha/beta heterodimers. Post-translationally, cleaved into an alpha and beta chain by autocatalysis; this activates the enzyme. The N-terminal residue of the beta subunit is responsible for the nucleophile hydrolase activity.

It catalyses the reaction N(4)-(beta-N-acetyl-D-glucosaminyl)-L-asparagine + H2O = N-acetyl-beta-D-glucosaminylamine + L-aspartate + H(+). In terms of biological role, cleaves the GlcNAc-Asn bond which joins oligosaccharides to the peptide of asparagine-linked glycoproteins. In Drosophila persimilis (Fruit fly), this protein is Putative N(4)-(beta-N-acetylglucosaminyl)-L-asparaginase GL17147.